Consider the following 470-residue polypeptide: Acetyl-CoA decarbonylase/synthase complex subunit beta 2 (470 aa).

The [Ni-Fe-S] cluster site is built by C189, C192, C278, and C280.

Belongs to the CdhC family. Monomer. The ACDS complex is made up of alpha, epsilon, beta, gamma and delta chains with a probable stoichiometry of (alpha(2)epsilon(2))(4)-beta(8)-(gamma(1)delta(1))(8) (Potential). It depends on [Ni-Fe-S] cluster as a cofactor.

The enzyme catalyses Co(I)-[corrinoid Fe-S protein] + acetyl-CoA + H(+) = methyl-Co(III)-[corrinoid Fe-S protein] + CO + CoA. It functions in the pathway one-carbon metabolism; methanogenesis from acetate. In terms of biological role, part of a complex that catalyzes the reversible cleavage of acetyl-CoA, allowing growth on acetate as sole source of carbon and energy. The alpha-epsilon complex generates CO from CO(2), while the beta subunit (this protein) combines the CO with CoA and a methyl group to form acetyl-CoA. The methyl group, which is incorporated into acetyl-CoA, is transferred to the beta subunit by a corrinoid iron-sulfur protein (the gamma-delta complex). The chain is Acetyl-CoA decarbonylase/synthase complex subunit beta 2 (cdhC2) from Methanosarcina acetivorans (strain ATCC 35395 / DSM 2834 / JCM 12185 / C2A).